The primary structure comprises 361 residues: L-threonine 3-dehydrogenase (361 aa).

Residue cysteine 38 participates in Zn(2+) binding. Residues threonine 40 and histidine 43 each act as charge relay system in the active site. Histidine 63, glutamate 64, cysteine 93, cysteine 96, cysteine 99, and cysteine 107 together coordinate Zn(2+). NAD(+)-binding positions include isoleucine 175, aspartate 195, arginine 200, 262 to 264 (LGI), and 286 to 287 (IY).

It belongs to the zinc-containing alcohol dehydrogenase family. As to quaternary structure, homotetramer. The cofactor is Zn(2+).

It is found in the cytoplasm. The catalysed reaction is L-threonine + NAD(+) = (2S)-2-amino-3-oxobutanoate + NADH + H(+). It functions in the pathway amino-acid degradation; L-threonine degradation via oxydo-reductase pathway; glycine from L-threonine: step 1/2. Functionally, catalyzes the NAD(+)-dependent oxidation of L-threonine to 2-amino-3-ketobutyrate. The polypeptide is L-threonine 3-dehydrogenase (Pectobacterium atrosepticum (strain SCRI 1043 / ATCC BAA-672) (Erwinia carotovora subsp. atroseptica)).